The following is an 81-amino-acid chain: ATP synthase subunit c (81 aa).

A run of 2 helical transmembrane segments spans residues 7 to 27 (LVAI…AIGF) and 55 to 75 (IAGL…FFIF).

Belongs to the ATPase C chain family. As to quaternary structure, F-type ATPases have 2 components, F(1) - the catalytic core - and F(0) - the membrane proton channel. F(1) has five subunits: alpha(3), beta(3), gamma(1), delta(1), epsilon(1). F(0) has three main subunits: a(1), b(2) and c(10-14). The alpha and beta chains form an alternating ring which encloses part of the gamma chain. F(1) is attached to F(0) by a central stalk formed by the gamma and epsilon chains, while a peripheral stalk is formed by the delta and b chains.

Its subcellular location is the cell inner membrane. F(1)F(0) ATP synthase produces ATP from ADP in the presence of a proton or sodium gradient. F-type ATPases consist of two structural domains, F(1) containing the extramembraneous catalytic core and F(0) containing the membrane proton channel, linked together by a central stalk and a peripheral stalk. During catalysis, ATP synthesis in the catalytic domain of F(1) is coupled via a rotary mechanism of the central stalk subunits to proton translocation. Functionally, key component of the F(0) channel; it plays a direct role in translocation across the membrane. A homomeric c-ring of between 10-14 subunits forms the central stalk rotor element with the F(1) delta and epsilon subunits. The chain is ATP synthase subunit c from Acinetobacter baumannii (strain ACICU).